A 403-amino-acid polypeptide reads, in one-letter code: Probable tRNA sulfurtransferase (403 aa).

Residues 60–165 (QLAEERLKPI…KEGVFLSCRT (106 aa)) form the THUMP domain. Residues 183–184 (ML), 208–209 (HF), R265, G287, and Q296 each bind ATP.

Belongs to the ThiI family.

It is found in the cytoplasm. It carries out the reaction [ThiI sulfur-carrier protein]-S-sulfanyl-L-cysteine + a uridine in tRNA + 2 reduced [2Fe-2S]-[ferredoxin] + ATP + H(+) = [ThiI sulfur-carrier protein]-L-cysteine + a 4-thiouridine in tRNA + 2 oxidized [2Fe-2S]-[ferredoxin] + AMP + diphosphate. It catalyses the reaction [ThiS sulfur-carrier protein]-C-terminal Gly-Gly-AMP + S-sulfanyl-L-cysteinyl-[cysteine desulfurase] + AH2 = [ThiS sulfur-carrier protein]-C-terminal-Gly-aminoethanethioate + L-cysteinyl-[cysteine desulfurase] + A + AMP + 2 H(+). Its pathway is cofactor biosynthesis; thiamine diphosphate biosynthesis. Its function is as follows. Catalyzes the ATP-dependent transfer of a sulfur to tRNA to produce 4-thiouridine in position 8 of tRNAs, which functions as a near-UV photosensor. Also catalyzes the transfer of sulfur to the sulfur carrier protein ThiS, forming ThiS-thiocarboxylate. This is a step in the synthesis of thiazole, in the thiamine biosynthesis pathway. The sulfur is donated as persulfide by IscS. This is Probable tRNA sulfurtransferase from Listeria innocua serovar 6a (strain ATCC BAA-680 / CLIP 11262).